We begin with the raw amino-acid sequence, 228 residues long: Cytidylate kinase (228 aa).

10-18 (GPSGSGKGT) serves as a coordination point for ATP.

The protein belongs to the cytidylate kinase family. Type 1 subfamily.

It localises to the cytoplasm. It catalyses the reaction CMP + ATP = CDP + ADP. The catalysed reaction is dCMP + ATP = dCDP + ADP. This Acinetobacter baumannii (strain AB0057) protein is Cytidylate kinase.